The sequence spans 93 residues: N-myc protein (93 aa).

In terms of assembly, efficient DNA binding requires dimerization with another bHLH protein. Binds DNA as a heterodimer with MAX. Barely detectable in most tissues assayed.

It localises to the nucleus. Its function is as follows. May function as a transcription factor. The polypeptide is N-myc protein (mycn) (Danio rerio (Zebrafish)).